A 207-amino-acid chain; its full sequence is Ubiquinol-cytochrome c reductase iron-sulfur subunit (207 aa).

A helical transmembrane segment spans residues 24 to 44; the sequence is LVAATSVVGAVGAGYALVPFV. The Rieske domain maps to 100–199; the sequence is PKLVDPTSEV…HVYLNDTTIL (100 aa). The [2Fe-2S] cluster site is built by Cys134, His136, Cys162, and His165. A disulfide bridge connects residues Cys139 and Cys164.

As to quaternary structure, the main subunits of complex b-c1 are: cytochrome b, cytochrome c1 and the Rieske protein. It depends on [2Fe-2S] cluster as a cofactor.

It localises to the cell membrane. The catalysed reaction is a quinol + 2 Fe(III)-[cytochrome c](out) = a quinone + 2 Fe(II)-[cytochrome c](out) + 2 H(+)(out). Its function is as follows. Component of the ubiquinol-cytochrome c reductase complex (complex III or cytochrome b-c1 complex), which is a respiratory chain that generates an electrochemical potential coupled to ATP synthesis. In Allochromatium vinosum (strain ATCC 17899 / DSM 180 / NBRC 103801 / NCIMB 10441 / D) (Chromatium vinosum), this protein is Ubiquinol-cytochrome c reductase iron-sulfur subunit (petA).